The primary structure comprises 786 residues: Endonuclease MutS2 (786 aa).

332-339 is an ATP binding site; it reads GPNTGGKT. Positions 711–786 constitute a Smr domain; the sequence is IDLRGMDSEE…GTGVTVVILK (76 aa).

This sequence belongs to the DNA mismatch repair MutS family. MutS2 subfamily. In terms of assembly, homodimer. Binds to stalled ribosomes, contacting rRNA.

In terms of biological role, endonuclease that is involved in the suppression of homologous recombination and thus may have a key role in the control of bacterial genetic diversity. Functionally, acts as a ribosome collision sensor, splitting the ribosome into its 2 subunits. Detects stalled/collided 70S ribosomes which it binds and splits by an ATP-hydrolysis driven conformational change. Acts upstream of the ribosome quality control system (RQC), a ribosome-associated complex that mediates the extraction of incompletely synthesized nascent chains from stalled ribosomes and their subsequent degradation. Probably generates substrates for RQC. This Clostridium perfringens (strain 13 / Type A) protein is Endonuclease MutS2.